The sequence spans 352 residues: Putative [LysW]-L-2-aminoadipate/[LysW]-L-glutamate phosphate reductase (352 aa).

Residues 10–13 (SGFT) and 34–36 (SRK) contribute to the NADP(+) site. Cys151 is a catalytic residue. Asn319 is an NADP(+) binding site.

It belongs to the NAGSA dehydrogenase family. Type 1 subfamily. LysY sub-subfamily.

It is found in the cytoplasm. The enzyme catalyses [amino-group carrier protein]-C-terminal-N-(1-carboxy-5-oxopentan-1-yl)-L-glutamine + phosphate + NADP(+) = [amino-group carrier protein]-C-terminal-N-(1-carboxy-5-phosphooxy-5-oxopentan-1-yl)-L-glutamine + NADPH + H(+). The catalysed reaction is [amino-group carrier protein]-C-terminal-gamma-(L-glutamyl-5-semialdehyde)-L-glutamate + phosphate + NADP(+) = [amino-group carrier protein]-C-terminal-gamma-(5-phospho-L-glutamyl)-L-glutamate + NADPH + H(+). It participates in amino-acid biosynthesis; L-lysine biosynthesis via AAA pathway; L-lysine from L-alpha-aminoadipate (Thermus route): step 3/5. Its pathway is amino-acid biosynthesis; L-arginine biosynthesis. Its function is as follows. Involved in both the arginine and lysine biosynthetic pathways. The polypeptide is Putative [LysW]-L-2-aminoadipate/[LysW]-L-glutamate phosphate reductase (Pyrobaculum neutrophilum (strain DSM 2338 / JCM 9278 / NBRC 100436 / V24Sta) (Thermoproteus neutrophilus)).